Reading from the N-terminus, the 308-residue chain is Ornithine carbamoyltransferase (308 aa).

Carbamoyl phosphate is bound by residues 56–59, glutamine 83, arginine 107, and 134–137; these read STRT and HPCQ. Residues asparagine 165, aspartate 225, and 229 to 230 each bind L-ornithine; that span reads SM. Residues 266-267 and arginine 294 contribute to the carbamoyl phosphate site; that span reads CL.

Belongs to the aspartate/ornithine carbamoyltransferase superfamily. OTCase family.

It localises to the cytoplasm. It catalyses the reaction carbamoyl phosphate + L-ornithine = L-citrulline + phosphate + H(+). It functions in the pathway amino-acid biosynthesis; L-arginine biosynthesis; L-arginine from L-ornithine and carbamoyl phosphate: step 1/3. Its function is as follows. Reversibly catalyzes the transfer of the carbamoyl group from carbamoyl phosphate (CP) to the N(epsilon) atom of ornithine (ORN) to produce L-citrulline. The protein is Ornithine carbamoyltransferase of Paracoccus denitrificans (strain Pd 1222).